The sequence spans 237 residues: Octopine transport system permease protein OccQ (237 aa).

The ABC transmembrane type-1 domain occupies 22-222; it reads TAMTMAVAFS…LITFVSGQVF (201 aa). Transmembrane regions (helical) follow at residues 26–46, 72–92, 96–116, and 202–222; these read MAVA…GAAA, LVIY…ASLF, GFVG…VSGA, and SFYL…GQVF.

This sequence belongs to the binding-protein-dependent transport system permease family. HisMQ subfamily.

It localises to the cell inner membrane. Functionally, component of the octopine active transport system probably consisting of four subunits: Q, M, P and T. The protein is Octopine transport system permease protein OccQ (occQ) of Agrobacterium tumefaciens (strain Ach5).